The sequence spans 466 residues: Uridine kinase-like protein 3 (466 aa).

Positions 41-246 are uridine kinase; sequence HGQPFVIGVA…IVQHIHTKLG (206 aa). A uracil phosphoribosyltransferase region spans residues 256–466; sequence NLYVIQSTFQ…GDRYFGTDDE (211 aa). GTP is bound by residues Lys280, Arg289, and 323-326; that span reads CKKL. The 5-phospho-alpha-D-ribose 1-diphosphate site is built by Arg333 and Arg358. Arg378 contributes to the GTP binding site. Residues Asp384, 389-392, and Glu455 each bind 5-phospho-alpha-D-ribose 1-diphosphate; that span reads TGNS. 454-456 lines the uracil pocket; sequence GEF.

It in the N-terminal section; belongs to the uridine kinase family. This sequence in the C-terminal section; belongs to the UPRTase family. Requires Mg(2+) as cofactor.

The enzyme catalyses UMP + diphosphate = 5-phospho-alpha-D-ribose 1-diphosphate + uracil. It catalyses the reaction cytidine + ATP = CMP + ADP + H(+). The catalysed reaction is uridine + ATP = UMP + ADP + H(+). It participates in pyrimidine metabolism; UMP biosynthesis via salvage pathway; UMP from uracil: step 1/1. It functions in the pathway pyrimidine metabolism; CTP biosynthesis via salvage pathway; CTP from cytidine: step 1/3. The protein operates within pyrimidine metabolism; UMP biosynthesis via salvage pathway; UMP from uridine: step 1/1. Its activity is regulated as follows. Allosterically activated by GTP. Functionally, involved in the pyrimidine salvage pathway. The uracil phosphoribosyltransferase (UPRT) activity, that catalyzes the conversion of uracil and 5-phospho-alpha-D-ribose 1-diphosphate (PRPP) to UMP and diphosphate, is unsure. The protein is Uridine kinase-like protein 3 (UKL3) of Arabidopsis thaliana (Mouse-ear cress).